Here is a 3564-residue protein sequence, read N- to C-terminus: CUB and sushi domain-containing protein 1 (3564 aa).

A signal peptide spans 1–29 (MTAWRKFKSLLLPLVLAVLCAGLLTAAKG). Over 30 to 3487 (QNCGGLVQGP…NHYQGTSSGS (3458 aa)) the chain is Extracellular. Disulfide bonds link Cys-32–Cys-58, Cys-145–Cys-185, Cys-171–Cys-202, Cys-208–Cys-234, Cys-349–Cys-389, Cys-375–Cys-406, Cys-411–Cys-437, Cys-527–Cys-567, Cys-553–Cys-580, and Cys-584–Cys-610. In terms of domain architecture, CUB 1 spans 32 to 140 (CGGLVQGPNG…QGFKAMYEVL (109 aa)). Asn-40 and Asn-57 each carry an N-linked (GlcNAc...) asparagine glycan. Residues 143–204 (HTCGNPGEIL…WDFPAPFCRA (62 aa)) form the Sushi 1 domain. The CUB 2 domain maps to 208–312 (CGGTLRGTSG…KGFNAQFQVK (105 aa)). A Sushi 2 domain is found at 347–408 (DMCPDPGIPD…WNDHRPICRA (62 aa)). Residues 411–522 (CGSNLRGPSG…PGFKAVYQEI (112 aa)) form the CUB 3 domain. The Sushi 3 domain occupies 525-582 (GGCGDPGIPAYGKRTGSSFLHGDTLTFECQAAFELVGERVITCQKNNQWSGNKPSCVF). The CUB 4 domain occupies 584–692 (CFFNFTAPSG…RGFNITYTTF (109 aa)). N-linked (GlcNAc...) asparagine glycans are attached at residues Asn-587 and Asn-686. In terms of domain architecture, Sushi 4 spans 695-756 (NECHDPGIPV…WSSTVPRCEA (62 aa)). Intrachain disulfides connect Cys-697–Cys-738, Cys-723–Cys-754, Cys-758–Cys-784, Cys-873–Cys-913, Cys-899–Cys-926, and Cys-930–Cys-956. The CUB 5 domain occupies 758-866 (CGGHLTASSG…VGFLIHYESV (109 aa)). A Sushi 5 domain is found at 871–928 (DSCLDPGIPVNGQRHGSNFGIRSTVTFSCDPGYTLSDDEPLVCEKNHQWNHALPSCDA). The CUB 6 domain occupies 930–1040 (CGGYIHGKSG…EGFNITFAEY (111 aa)). N-linked (GlcNAc...) asparagine glycosylation is found at Asn-955, Asn-1015, and Asn-1034. One can recognise a Sushi 6 domain in the interval 1043 to 1102 (EPCDDPGVPAFSRRIGFQFGVGDTLAFTCFQGYRLEGATKLTCLGGGRRVWSAPLPRCVA). 3 cysteine pairs are disulfide-bonded: Cys-1045/Cys-1085, Cys-1071/Cys-1100, and Cys-1104/Cys-1130. The 109-residue stretch at 1104-1212 (CGASVKGNEG…QGFQLTYTSF (109 aa)) folds into the CUB 7 domain. N-linked (GlcNAc...) asparagine glycosylation is found at Asn-1184 and Asn-1197. Positions 1215–1275 (VKCEDPGIPN…WDKPMPSCVA (61 aa)) constitute a Sushi 7 domain. 12 disulfide bridges follow: Cys-1217/Cys-1258, Cys-1244/Cys-1273, Cys-1277/Cys-1304, Cys-1391/Cys-1431, Cys-1417/Cys-1447, Cys-1451/Cys-1477, Cys-1564/Cys-1604, Cys-1590/Cys-1621, Cys-1625/Cys-1651, Cys-1741/Cys-1781, Cys-1767/Cys-1798, and Cys-1802/Cys-1828. The CUB 8 domain maps to 1277–1386 (CGGLVHAATS…SGFSIQFSTS (110 aa)). The 61-residue stretch at 1389-1449 (STCNDPGMPQ…WQPDPPSCIA (61 aa)) folds into the Sushi 8 domain. Residue Asn-1399 is glycosylated (N-linked (GlcNAc...) asparagine). The region spanning 1451–1559 (CGGNLTGPAG…SGFAIEFKEK (109 aa)) is the CUB 9 domain. Residues Asn-1454 and Asn-1572 are each glycosylated (N-linked (GlcNAc...) asparagine). Residues 1562–1623 (EACFDPGNIM…WDRALPACQA (62 aa)) enclose the Sushi 9 domain. Positions 1625 to 1733 (CGGQYTGSEG…RGFHFVYQAV (109 aa)) constitute a CUB 10 domain. N-linked (GlcNAc...) asparagine glycosylation is present at Asn-1644. The 62-residue stretch at 1739 to 1800 (TQCSSVPEPR…WNDTIPSCVV (62 aa)) folds into the Sushi 10 domain. Asn-1792, Asn-1805, and Asn-1882 each carry an N-linked (GlcNAc...) asparagine glycan. The 109-residue stretch at 1802–1910 (CSGNFTQRRG…AGFHLEYKTV (109 aa)) folds into the CUB 11 domain. Positions 1913 to 1972 (AACQEPALPSNGIKIGDRYMVNDVLSFQCEPGYTLQGRSHISCMPGTVRRWNYPSPLCIA) constitute a Sushi 11 domain. 3 disulfides stabilise this stretch: Cys-1915-Cys-1955, Cys-1941-Cys-1970, and Cys-1974-Cys-2000. The CUB 12 domain occupies 1974-2082 (CGGTLTSMSG…QGFKLSYQAY (109 aa)). Asn-2018 is a glycosylation site (N-linked (GlcNAc...) asparagine). One can recognise a Sushi 12 domain in the interval 2085–2144 (QNCPDPPAFQNGFMINSDYSVGQSISFECYPGYILLGHPVLTCQHGTDRNWNYPFPRCDA). Intrachain disulfides connect Cys-2087/Cys-2127, Cys-2113/Cys-2142, and Cys-2146/Cys-2172. A CUB 13 domain is found at 2146–2257 (CGYNVTSQNG…LNFHAFQLKR (112 aa)). Residues Asn-2149, Asn-2154, and Asn-2187 are each glycosylated (N-linked (GlcNAc...) asparagine). The Sushi 13 domain maps to 2256 to 2317 (KRCPPPPAVP…FQGSPPTCEA (62 aa)). Disulfide bonds link Cys-2258–Cys-2300, Cys-2286–Cys-2315, and Cys-2319–Cys-2347. The 112-residue stretch at 2319-2430 (CPANEVRTES…KGFKIRYAAP (112 aa)) folds into the CUB 14 domain. Residues Asn-2358, Asn-2394, Asn-2400, Asn-2445, Asn-2470, and Asn-2503 are each glycosylated (N-linked (GlcNAc...) asparagine). 15 consecutive Sushi domains span residues 2430–2492 (PYCS…LCQA), 2493–2554 (VSCG…TCKP), 2555–2619 (VPCP…RCKV), 2620–2677 (ISCG…RCLA), 2678–2735 (GHCG…VCVP), 2736–2793 (ITCG…ICRV), 2794–2856 (VNCS…KCLA), 2857–2914 (ISCG…HCSG), 2918–2975 (GFCG…VCEA), 2976–3034 (VSCG…DCTI), 3035–3094 (ISCG…LCKA), 3095–3152 (VLCN…QCLP), 3153–3210 (VFCG…TCID), 3214–3272 (TACP…ECIP), and 3273–3332 (HACR…VCKS). Intrachain disulfides connect Cys-2432-Cys-2473, Cys-2459-Cys-2490, Cys-2495-Cys-2537, Cys-2521-Cys-2552, Cys-2557-Cys-2602, Cys-2588-Cys-2617, Cys-2622-Cys-2662, Cys-2648-Cys-2675, Cys-2680-Cys-2720, Cys-2706-Cys-2733, Cys-2738-Cys-2778, and Cys-2764-Cys-2791. N-linked (GlcNAc...) asparagine glycosylation occurs at Asn-2605. N-linked (GlcNAc...) asparagine glycosylation is found at Asn-2750 and Asn-2761. The N-linked (GlcNAc...) asparagine glycan is linked to Asn-2795. 18 disulfide bridges follow: Cys-2796/Cys-2841, Cys-2827/Cys-2854, Cys-2859/Cys-2899, Cys-2885/Cys-2912, Cys-2920/Cys-2960, Cys-2946/Cys-2973, Cys-2978/Cys-3019, Cys-3005/Cys-3032, Cys-3037/Cys-3079, Cys-3063/Cys-3092, Cys-3097/Cys-3137, Cys-3123/Cys-3150, Cys-3155/Cys-3195, Cys-3181/Cys-3208, Cys-3216/Cys-3257, Cys-3243/Cys-3270, Cys-3275/Cys-3317, and Cys-3302/Cys-3330. A glycan (N-linked (GlcNAc...) asparagine) is linked at Asn-2894. Residue Asn-2963 is glycosylated (N-linked (GlcNAc...) asparagine). 3 N-linked (GlcNAc...) asparagine glycosylation sites follow: Asn-3022, Asn-3056, and Asn-3086. Asn-3228 and Asn-3260 each carry an N-linked (GlcNAc...) asparagine glycan. N-linked (GlcNAc...) asparagine glycosylation is found at Asn-3339, Asn-3379, and Asn-3386. A helical transmembrane segment spans residues 3488-3508 (VAAAILVPFFALILSGFAFYL). The Cytoplasmic portion of the chain corresponds to 3509–3564 (YKHRTRPKVQYNGYAGHENSNGQASFENPMYDTNLKPTEAKAVRFDTTLNTVCTVV).

Belongs to the CSMD family.

The protein localises to the membrane. The sequence is that of CUB and sushi domain-containing protein 1 (Csmd1) from Mus musculus (Mouse).